Here is a 93-residue protein sequence, read N- to C-terminus: Cobalt transport protein CbiN (93 aa).

2 consecutive transmembrane segments (helical) span residues 5 to 25 (LMLLAMVVALVILPFFINHGG) and 63 to 83 (LLFTLQGSLGAAVIFYILGYC).

It belongs to the CbiN family. As to quaternary structure, forms an energy-coupling factor (ECF) transporter complex composed of an ATP-binding protein (A component, CbiO), a transmembrane protein (T component, CbiQ) and 2 possible substrate-capture proteins (S components, CbiM and CbiN) of unknown stoichimetry.

The protein resides in the cell inner membrane. The protein operates within cofactor biosynthesis; adenosylcobalamin biosynthesis. Part of the energy-coupling factor (ECF) transporter complex CbiMNOQ involved in cobalt import. The protein is Cobalt transport protein CbiN of Salmonella choleraesuis (strain SC-B67).